We begin with the raw amino-acid sequence, 506 residues long: Steroid (22S)-hydroxylase (506 aa).

Residues Leu12–Ala32 form a helical membrane-spanning segment. Cys449 is a binding site for heme.

The protein belongs to the cytochrome P450 family. The cofactor is heme.

The protein localises to the membrane. It catalyses the reaction a C28-steroid + reduced [NADPH--hemoprotein reductase] + O2 = a (22S)-22-hydroxy C28-steroid + oxidized [NADPH--hemoprotein reductase] + H2O + H(+). The catalysed reaction is campesterol + reduced [NADPH--hemoprotein reductase] + O2 = (22S)-22-hydroxycampesterol + oxidized [NADPH--hemoprotein reductase] + H2O + H(+). It carries out the reaction campestanol + reduced [NADPH--hemoprotein reductase] + O2 = 6-deoxycathasterone + oxidized [NADPH--hemoprotein reductase] + H2O + H(+). Its pathway is plant hormone biosynthesis; brassinosteroid biosynthesis. Its function is as follows. Catalyzes the C22-alpha-hydroxylation step in brassinosteroid biosynthesis, which is the rate-limiting step in this biosynthetic pathway. Catalyzes the conversion of campesterol (CR) to (22S)-22-hydroxycampesterol (22-OHCR, 22-hydroxyCR) and of campestanol (CN) to 6-deoxocathasterone (6-deoxoCT). In Oryza sativa subsp. indica (Rice), this protein is Steroid (22S)-hydroxylase.